A 139-amino-acid chain; its full sequence is MASVQAYAQWVTVHLINSMSSETLSIQNASLSWGKWYKDGDKDAEITSEDVQQKTAPPGGSVNVNSCGRSDASSGTTGGFDLYDGNTKIGRVHWDCPWGSKTNDFDVGERNKNYWVEIGTWNKYGGAIGTVDVEVGRKR.

Residues 1–5 constitute a propeptide that is removed on maturation; sequence MASVQ. A disordered region spans residues 47-79; it reads TSEDVQQKTAPPGGSVNVNSCGRSDASSGTTGG. A compositionally biased stretch (polar residues) spans 62–75; it reads VNVNSCGRSDASSG.

It belongs to the aegerolysin family.

This chain is Asp-hemolysin, found in Aspergillus fumigatus (strain ATCC MYA-4609 / CBS 101355 / FGSC A1100 / Af293) (Neosartorya fumigata).